A 76-amino-acid chain; its full sequence is UPF0248 protein PAE2518 (76 aa).

The protein belongs to the UPF0248 family.

In Pyrobaculum aerophilum (strain ATCC 51768 / DSM 7523 / JCM 9630 / CIP 104966 / NBRC 100827 / IM2), this protein is UPF0248 protein PAE2518.